The following is a 427-amino-acid chain: Glutamate-1-semialdehyde 2,1-aminomutase (427 aa).

Lys265 carries the N6-(pyridoxal phosphate)lysine modification.

It belongs to the class-III pyridoxal-phosphate-dependent aminotransferase family. HemL subfamily. As to quaternary structure, homodimer. The cofactor is pyridoxal 5'-phosphate.

The protein resides in the cytoplasm. The catalysed reaction is (S)-4-amino-5-oxopentanoate = 5-aminolevulinate. The protein operates within porphyrin-containing compound metabolism; protoporphyrin-IX biosynthesis; 5-aminolevulinate from L-glutamyl-tRNA(Glu): step 2/2. The chain is Glutamate-1-semialdehyde 2,1-aminomutase from Bordetella bronchiseptica (strain ATCC BAA-588 / NCTC 13252 / RB50) (Alcaligenes bronchisepticus).